The following is a 304-amino-acid chain: Acetylglutamate kinase (304 aa).

Residues glycine 64 to glycine 65, arginine 86, and asparagine 181 contribute to the substrate site.

This sequence belongs to the acetylglutamate kinase family. ArgB subfamily.

It localises to the plastid. The protein resides in the chloroplast. The enzyme catalyses N-acetyl-L-glutamate + ATP = N-acetyl-L-glutamyl 5-phosphate + ADP. It participates in amino-acid biosynthesis; L-arginine biosynthesis; N(2)-acetyl-L-ornithine from L-glutamate: step 2/4. Functionally, catalyzes the ATP-dependent phosphorylation of N-acetyl-L-glutamate. The polypeptide is Acetylglutamate kinase (Cyanidium caldarium (Red alga)).